Consider the following 229-residue polypeptide: Enolase-phosphatase E1 (229 aa).

Belongs to the HAD-like hydrolase superfamily. MasA/MtnC family. Monomer. Requires Mg(2+) as cofactor.

It catalyses the reaction 5-methylsulfanyl-2,3-dioxopentyl phosphate + H2O = 1,2-dihydroxy-5-(methylsulfanyl)pent-1-en-3-one + phosphate. Its pathway is amino-acid biosynthesis; L-methionine biosynthesis via salvage pathway; L-methionine from S-methyl-5-thio-alpha-D-ribose 1-phosphate: step 3/6. It participates in amino-acid biosynthesis; L-methionine biosynthesis via salvage pathway; L-methionine from S-methyl-5-thio-alpha-D-ribose 1-phosphate: step 4/6. Bifunctional enzyme that catalyzes the enolization of 2,3-diketo-5-methylthiopentyl-1-phosphate (DK-MTP-1-P) into the intermediate 2-hydroxy-3-keto-5-methylthiopentenyl-1-phosphate (HK-MTPenyl-1-P), which is then dephosphorylated to form the acireductone 1,2-dihydroxy-3-keto-5-methylthiopentene (DHK-MTPene). The protein is Enolase-phosphatase E1 of Pectobacterium atrosepticum (strain SCRI 1043 / ATCC BAA-672) (Erwinia carotovora subsp. atroseptica).